A 44-amino-acid polypeptide reads, in one-letter code: Photosystem I reaction center subunit IX (44 aa).

A helical membrane pass occupies residues 7–27; it reads YLSVAPVLTTLWFGSLAGLLI.

The protein belongs to the PsaJ family.

It is found in the plastid. The protein localises to the chloroplast thylakoid membrane. In terms of biological role, may help in the organization of the PsaE and PsaF subunits. This is Photosystem I reaction center subunit IX from Liriodendron tulipifera (Tuliptree).